The following is a 513-amino-acid chain: ATP synthase subunit alpha 1 (513 aa).

ATP is bound at residue 169–176 (GDRQTGKT).

The protein belongs to the ATPase alpha/beta chains family. In terms of assembly, F-type ATPases have 2 components, CF(1) - the catalytic core - and CF(0) - the membrane proton channel. CF(1) has five subunits: alpha(3), beta(3), gamma(1), delta(1), epsilon(1). CF(0) has three main subunits: a(1), b(2) and c(9-12). The alpha and beta chains form an alternating ring which encloses part of the gamma chain. CF(1) is attached to CF(0) by a central stalk formed by the gamma and epsilon chains, while a peripheral stalk is formed by the delta and b chains.

The protein resides in the cell inner membrane. The catalysed reaction is ATP + H2O + 4 H(+)(in) = ADP + phosphate + 5 H(+)(out). Functionally, produces ATP from ADP in the presence of a proton gradient across the membrane. The alpha chain is a regulatory subunit. In Methylococcus capsulatus (strain ATCC 33009 / NCIMB 11132 / Bath), this protein is ATP synthase subunit alpha 1.